A 452-amino-acid polypeptide reads, in one-letter code: MVAVAILAAGKGTRMKSQLPKVLHRLGSQTLLDRVLASLTPLNVDRCFVIVGYQGDRVRESWAHRTDIEFVEQTQQLGTGHAVQQLLPHLKGYQGDLLVLNGDVPLLRGETLEALVSGHQRSGAAATLLTAQLNQPKGYGRVFCDATSRVCEIIEDRDCTPAQRQNPRVNAGVYCFRWPDLEAVLPNLSTANDQQEYYLTEAITYLDPVSAVEVADSQEILGINDRLQLADSFRILQERIRQQWMLAGVTLVDPTSITIDETVQLGTDVVIEPQTHLRGNTVIGNNCSIGPNSLITNSQIGDGVTVQMSVISDSTIAANSKIGPFAHLRGAAAIGEACRIGNFVEVKKSTVGDRTNVAHLSYLGDATLGQRVNVGAGTITANYDGVSKHPTVIGDRSKTGANSVLVAPVTIGQDVTIAAGSTINKDVPDGALAIARSRQTIHENWSTPTTEQ.

Positions Met-1 to Arg-226 are pyrophosphorylase. Residues Leu-7–Gly-10, Lys-21, Gln-73, and Gly-78–Thr-79 contribute to the UDP-N-acetyl-alpha-D-glucosamine site. Residue Asp-103 coordinates Mg(2+). UDP-N-acetyl-alpha-D-glucosamine contacts are provided by Gly-140, Glu-155, Asn-170, and Asn-224. Asn-224 provides a ligand contact to Mg(2+). The segment at Leu-227–Ala-247 is linker. An N-acetyltransferase region spans residues Gly-248 to Gln-452. 2 residues coordinate UDP-N-acetyl-alpha-D-glucosamine: Arg-329 and Lys-347. Catalysis depends on His-359, which acts as the Proton acceptor. UDP-N-acetyl-alpha-D-glucosamine-binding residues include Tyr-362 and Asn-373. Residues Ala-376, Asn-382–Tyr-383, Ala-419, and Arg-436 each bind acetyl-CoA.

It in the N-terminal section; belongs to the N-acetylglucosamine-1-phosphate uridyltransferase family. The protein in the C-terminal section; belongs to the transferase hexapeptide repeat family. Homotrimer. Mg(2+) serves as cofactor.

Its subcellular location is the cytoplasm. The catalysed reaction is alpha-D-glucosamine 1-phosphate + acetyl-CoA = N-acetyl-alpha-D-glucosamine 1-phosphate + CoA + H(+). The enzyme catalyses N-acetyl-alpha-D-glucosamine 1-phosphate + UTP + H(+) = UDP-N-acetyl-alpha-D-glucosamine + diphosphate. It participates in nucleotide-sugar biosynthesis; UDP-N-acetyl-alpha-D-glucosamine biosynthesis; N-acetyl-alpha-D-glucosamine 1-phosphate from alpha-D-glucosamine 6-phosphate (route II): step 2/2. Its pathway is nucleotide-sugar biosynthesis; UDP-N-acetyl-alpha-D-glucosamine biosynthesis; UDP-N-acetyl-alpha-D-glucosamine from N-acetyl-alpha-D-glucosamine 1-phosphate: step 1/1. It functions in the pathway bacterial outer membrane biogenesis; LPS lipid A biosynthesis. Functionally, catalyzes the last two sequential reactions in the de novo biosynthetic pathway for UDP-N-acetylglucosamine (UDP-GlcNAc). The C-terminal domain catalyzes the transfer of acetyl group from acetyl coenzyme A to glucosamine-1-phosphate (GlcN-1-P) to produce N-acetylglucosamine-1-phosphate (GlcNAc-1-P), which is converted into UDP-GlcNAc by the transfer of uridine 5-monophosphate (from uridine 5-triphosphate), a reaction catalyzed by the N-terminal domain. This Synechococcus sp. (strain ATCC 27144 / PCC 6301 / SAUG 1402/1) (Anacystis nidulans) protein is Bifunctional protein GlmU.